The following is a 240-amino-acid chain: Phosphoribosylaminoimidazole-succinocarboxamide synthase (240 aa).

Belongs to the SAICAR synthetase family.

It carries out the reaction 5-amino-1-(5-phospho-D-ribosyl)imidazole-4-carboxylate + L-aspartate + ATP = (2S)-2-[5-amino-1-(5-phospho-beta-D-ribosyl)imidazole-4-carboxamido]succinate + ADP + phosphate + 2 H(+). Its pathway is purine metabolism; IMP biosynthesis via de novo pathway; 5-amino-1-(5-phospho-D-ribosyl)imidazole-4-carboxamide from 5-amino-1-(5-phospho-D-ribosyl)imidazole-4-carboxylate: step 1/2. This Pyrobaculum calidifontis (strain DSM 21063 / JCM 11548 / VA1) protein is Phosphoribosylaminoimidazole-succinocarboxamide synthase.